Consider the following 126-residue polypeptide: Putative lipoprotein LprD (126 aa).

A signal peptide spans 1–21; it reads MSTTRRRRPALIALVIIATCG. Residue Cys22 is the site of N-palmitoyl cysteine attachment. A lipid anchor (S-diacylglycerol cysteine) is attached at Cys22. A helical membrane pass occupies residues 40–60; it reads FQNLGYALQWPLFAWFCVYAY. Positions 70 to 101 are disordered; that stretch reads PPQPPTGGAAAEIPAGLLPERPKPAQQPPDDP.

This sequence to M.leprae ML1177.

The protein localises to the cell membrane. The polypeptide is Putative lipoprotein LprD (lprD) (Mycobacterium tuberculosis (strain CDC 1551 / Oshkosh)).